A 253-amino-acid polypeptide reads, in one-letter code: Ubiquinone biosynthesis O-methyltransferase (253 aa).

S-adenosyl-L-methionine-binding residues include R47, G78, D99, and M141.

The protein belongs to the methyltransferase superfamily. UbiG/COQ3 family.

It carries out the reaction a 3-demethylubiquinol + S-adenosyl-L-methionine = a ubiquinol + S-adenosyl-L-homocysteine + H(+). The catalysed reaction is a 3-(all-trans-polyprenyl)benzene-1,2-diol + S-adenosyl-L-methionine = a 2-methoxy-6-(all-trans-polyprenyl)phenol + S-adenosyl-L-homocysteine + H(+). Its pathway is cofactor biosynthesis; ubiquinone biosynthesis. Functionally, O-methyltransferase that catalyzes the 2 O-methylation steps in the ubiquinone biosynthetic pathway. This chain is Ubiquinone biosynthesis O-methyltransferase, found in Bradyrhizobium sp. (strain ORS 278).